The following is a 285-amino-acid chain: MATKLQDGNTPCLAATPSEPRPTVLVFDSGVGGLSVYDEIRHLLPDLHYIYAFDNVAFPYGEKNEDFIVERVVEIVTAVQERYPLALAVVACNTASTVSLPALREKFAFPVVGVVPAIKPAARLTANGIVGLLATRGTVKRSYTHELIARFANECQIEMLGSAEMVELAEAKLHGEDVSLDALKRILRPWLRMKEPPDTVVLGCTHFPLLQEELLQVLPEGTRLVDSGAAIARRTAWLLEHEAPDAKSADANIAFCMDMTPEAEQLLPVLQRYGFKTLEKLAVSG.

Residues Asp-28–Ser-29 and Tyr-60–Gly-61 contribute to the substrate site. Cys-92 functions as the Proton donor/acceptor in the catalytic mechanism. Substrate is bound at residue Asn-93–Thr-94. The active-site Proton donor/acceptor is the Cys-204. Thr-205–His-206 contacts substrate.

Belongs to the aspartate/glutamate racemases family.

The enzyme catalyses L-glutamate = D-glutamate. The protein operates within cell wall biogenesis; peptidoglycan biosynthesis. Its function is as follows. Provides the (R)-glutamate required for cell wall biosynthesis. The chain is Glutamate racemase from Escherichia fergusonii (strain ATCC 35469 / DSM 13698 / CCUG 18766 / IAM 14443 / JCM 21226 / LMG 7866 / NBRC 102419 / NCTC 12128 / CDC 0568-73).